A 430-amino-acid chain; its full sequence is DD-carboxypeptidase/endopeptidase Mpg (430 aa).

Positions 295, 299, and 375 each coordinate Zn(2+).

This sequence belongs to the peptidase M23B family. In terms of assembly, monomer. Zn(2+) is required as a cofactor. Likely to be synthesized as a proenzyme. The cleavage of the N-terminal domain is probably required for the activation of the enzyme.

It is found in the cell outer membrane. Its activity is regulated as follows. Peptidoglycan (PG) degradation activity is completely inhibited by zinc chelating EDTA and phenanthroline. Functionally, has both endopeptidase and DD-carboxypeptidase activities. Degrades cell wall peptidoglycan (PG) to allow consummate expression of pili. Degrades N.gonorrhoeae and E.coli PG side chains in vitro. Required for proper piliation, which in turn is required for normal colony morphology, resistance to H(2)O(2) damage and defense against killing by human polymorphonuclear leukocytes (PMNs). Involved in type IV pilus biogenesis. Involved in resistance against non-oxidative killing by adherent CXCL8/IL8-primed human PMNs. Protects from killing by PMN-produced antimicrobial factors, which kill by a mechanism completely independent of reactive oxygen species (ROS) production of the PMNs. Provides protection against oxidative damage caused by peroxides H(2)O(2) and cumene hydroperoxide in vitro. This is DD-carboxypeptidase/endopeptidase Mpg from Neisseria gonorrhoeae (strain ATCC 700825 / FA 1090).